A 226-amino-acid chain; its full sequence is V-type proton ATPase subunit E 2 (226 aa).

It belongs to the V-ATPase E subunit family. As to quaternary structure, V-ATPase is a heteromultimeric enzyme made up of two complexes: the ATP-hydrolytic V1 complex and the proton translocation V0 complex. The V1 complex consists of three catalytic AB heterodimers that form a heterohexamer, three peripheral stalks each consisting of EG heterodimers, one central rotor including subunits D and F, and the regulatory subunits C and H. The proton translocation complex V0 consists of the proton transport subunit a, a ring of proteolipid subunits c9c'', rotary subunit d, subunits e and f, and the accessory subunits ATP6AP1/Ac45 and ATP6AP2/PRR.

Functionally, subunit of the V1 complex of vacuolar(H+)-ATPase (V-ATPase), a multisubunit enzyme composed of a peripheral complex (V1) that hydrolyzes ATP and a membrane integral complex (V0) that translocates protons. V-ATPase is responsible for acidifying and maintaining the pH of intracellular compartments and in some cell types, is targeted to the plasma membrane, where it is responsible for acidifying the extracellular environment. This chain is V-type proton ATPase subunit E 2 (ATP6V1E2), found in Bos taurus (Bovine).